A 395-amino-acid polypeptide reads, in one-letter code: Protein TAMALIN (395 aa).

The disordered stretch occupies residues 1–52 (MTLRRLRKLQQKEEAAATPDPAARTPDSEVAPAAPVPTPGPPAAAATPGPPA). Over residues 16-33 (AATPDPAARTPDSEVAPA) the composition is skewed to low complexity. Threonine 77 bears the Phosphothreonine mark. Serine 94 is modified (phosphoserine). The PDZ domain maps to 101 to 190 (VLTLEKEDNQ…VLRLETLYGT (90 aa)). The tract at residues 181–258 (VLRLETLYGT…GAGLLPGSLP (78 aa)) is interaction with PSCD3. The residue at position 237 (tyrosine 237) is a Phosphotyrosine. Arginine 270 carries the post-translational modification Omega-N-methylarginine. Residues 293–349 (SEPPALPPPPPPARAFGPGPAETPAVGPGPGPRAALSRSASVRCAGPGGGGGGGAPG) form a disordered region. A compositionally biased stretch (pro residues) spans 296-305 (PALPPPPPPA). The span at 338-348 (GPGGGGGGGAP) shows a compositional bias: gly residues. Serine 387 bears the Phosphoserine mark.

As to quaternary structure, heteromer. Composed of TAMALIN, CYTH2 and at least one GRM1. Also interacts with CYTH3, GRM2, GRM3 and GRM5.

Its subcellular location is the cytoplasm. It localises to the perinuclear region. The protein localises to the cell membrane. It is found in the postsynaptic cell membrane. Its function is as follows. Plays a role in intracellular trafficking and contributes to the macromolecular organization of group 1 metabotropic glutamate receptors (mGluRs) at synapses. In Homo sapiens (Human), this protein is Protein TAMALIN.